The sequence spans 440 residues: Glutamyl-tRNA reductase (440 aa).

Substrate is bound by residues 40–43 (TCNR), Ser-100, 105–107 (ERE), and Gln-111. Residue Cys-41 is the Nucleophile of the active site. 181-186 (GTGAYA) contacts NADP(+).

Belongs to the glutamyl-tRNA reductase family. Homodimer.

It catalyses the reaction (S)-4-amino-5-oxopentanoate + tRNA(Glu) + NADP(+) = L-glutamyl-tRNA(Glu) + NADPH + H(+). It participates in porphyrin-containing compound metabolism; protoporphyrin-IX biosynthesis; 5-aminolevulinate from L-glutamyl-tRNA(Glu): step 1/2. Functionally, catalyzes the NADPH-dependent reduction of glutamyl-tRNA(Glu) to glutamate 1-semialdehyde (GSA). The polypeptide is Glutamyl-tRNA reductase (Renibacterium salmoninarum (strain ATCC 33209 / DSM 20767 / JCM 11484 / NBRC 15589 / NCIMB 2235)).